The primary structure comprises 835 residues: Protein translocase subunit SecA 1 (835 aa).

ATP-binding positions include glutamine 85, 103–107 (GEGKT), and aspartate 492. A disordered region spans residues 788-807 (VQGEAVHPSSDGEEAKKKPV). 4 residues coordinate Zn(2+): cysteine 819, cysteine 821, cysteine 830, and cysteine 831.

The protein belongs to the SecA family. In terms of assembly, monomer and homodimer. Part of the essential Sec protein translocation apparatus which comprises SecA, SecYEG and auxiliary proteins SecDF. Other proteins may also be involved. Requires Zn(2+) as cofactor.

The protein resides in the cell membrane. Its subcellular location is the cytoplasm. The enzyme catalyses ATP + H2O + cellular proteinSide 1 = ADP + phosphate + cellular proteinSide 2.. Part of the Sec protein translocase complex. Interacts with the SecYEG preprotein conducting channel. Has a central role in coupling the hydrolysis of ATP to the transfer of proteins into and across the cell membrane, serving as an ATP-driven molecular motor driving the stepwise translocation of polypeptide chains across the membrane. The sequence is that of Protein translocase subunit SecA 1 from Bacillus thuringiensis subsp. konkukian (strain 97-27).